The primary structure comprises 397 residues: Elongation factor Tu (397 aa).

One can recognise a tr-type G domain in the interval 10–206 (KPHVNIGTIG…HIDTYIPEPT (197 aa)). A G1 region spans residues 19 to 26 (GHVDHGKT). 19 to 26 (GHVDHGKT) is a GTP binding site. T26 is a Mg(2+) binding site. The segment at 61-65 (GITIS) is G2. Residues 82–85 (DCPG) are G3. GTP contacts are provided by residues 82–86 (DCPGH) and 137–140 (NKCD). A G4 region spans residues 137–140 (NKCD). A G5 region spans residues 175 to 177 (SAL).

The protein belongs to the TRAFAC class translation factor GTPase superfamily. Classic translation factor GTPase family. EF-Tu/EF-1A subfamily. Monomer.

The protein resides in the cytoplasm. The catalysed reaction is GTP + H2O = GDP + phosphate + H(+). In terms of biological role, GTP hydrolase that promotes the GTP-dependent binding of aminoacyl-tRNA to the A-site of ribosomes during protein biosynthesis. In Alkaliphilus oremlandii (strain OhILAs) (Clostridium oremlandii (strain OhILAs)), this protein is Elongation factor Tu.